The sequence spans 218 residues: Chymotrypsin-2 (218 aa).

Residues 1–218 enclose the Peptidase S1 domain; that stretch reads IVGGTDAPRG…FLDWIQKNQL (218 aa). An intrachain disulfide couples cysteine 25 to cysteine 40. Catalysis depends on charge relay system residues histidine 39 and aspartate 84. 2 disulfides stabilise this stretch: cysteine 148-cysteine 161 and cysteine 171-cysteine 195. Catalysis depends on serine 175, which acts as the Charge relay system.

This sequence belongs to the peptidase S1 family.

It is found in the secreted. The protein resides in the extracellular space. The enzyme catalyses Preferential cleavage: Tyr-|-Xaa, Trp-|-Xaa, Phe-|-Xaa, Leu-|-Xaa.. This is Chymotrypsin-2 from Vespa crabro (European hornet).